We begin with the raw amino-acid sequence, 106 residues long: Large ribosomal subunit protein uL24 (106 aa).

The protein belongs to the universal ribosomal protein uL24 family. As to quaternary structure, part of the 50S ribosomal subunit.

One of two assembly initiator proteins, it binds directly to the 5'-end of the 23S rRNA, where it nucleates assembly of the 50S subunit. Functionally, one of the proteins that surrounds the polypeptide exit tunnel on the outside of the subunit. This Acidithiobacillus ferrooxidans (strain ATCC 53993 / BNL-5-31) (Leptospirillum ferrooxidans (ATCC 53993)) protein is Large ribosomal subunit protein uL24.